A 370-amino-acid chain; its full sequence is Histidinol-phosphate aminotransferase (370 aa).

K229 carries the N6-(pyridoxal phosphate)lysine modification.

This sequence belongs to the class-II pyridoxal-phosphate-dependent aminotransferase family. Histidinol-phosphate aminotransferase subfamily. Homodimer. Pyridoxal 5'-phosphate is required as a cofactor.

The enzyme catalyses L-histidinol phosphate + 2-oxoglutarate = 3-(imidazol-4-yl)-2-oxopropyl phosphate + L-glutamate. The protein operates within amino-acid biosynthesis; L-histidine biosynthesis; L-histidine from 5-phospho-alpha-D-ribose 1-diphosphate: step 7/9. In Helicobacter hepaticus (strain ATCC 51449 / 3B1), this protein is Histidinol-phosphate aminotransferase.